The chain runs to 76 residues: Acyl carrier protein (76 aa).

The Carrier domain maps to 1–74; that stretch reads MEERIKEIIA…DVINYIKEKK (74 aa). Position 34 is an O-(pantetheine 4'-phosphoryl)serine (S34).

It belongs to the acyl carrier protein (ACP) family. 4'-phosphopantetheine is transferred from CoA to a specific serine of apo-ACP by AcpS. This modification is essential for activity because fatty acids are bound in thioester linkage to the sulfhydryl of the prosthetic group.

The protein resides in the cytoplasm. It participates in lipid metabolism; fatty acid biosynthesis. Functionally, carrier of the growing fatty acid chain in fatty acid biosynthesis. The sequence is that of Acyl carrier protein from Persephonella marina (strain DSM 14350 / EX-H1).